The following is a 300-amino-acid chain: Arginine/serine-rich protein 1 (300 aa).

The segment at 1–142 (MSSAAVSKYV…RGRSHHRRSY (142 aa)) is disordered. Ser17 is subject to Phosphoserine. Positions 23-36 (SPSTSGSGRSSRLS) are enriched in low complexity. Basic residues predominate over residues 37–104 (SRSRSRSSSR…RSRSRSRGHR (68 aa)). Residues 105–115 (YYRDSRYEQPR) are compositionally biased toward basic and acidic residues. Positions 116–125 (RYYQSPSPYR) are enriched in low complexity. A phosphoserine mark is found at Ser120 and Ser122. Basic residues predominate over residues 126–141 (SRSRSRSRGRSHHRRS). Arg147 carries the omega-N-methylarginine modification. The tract at residues 222 to 300 (QGAVSCSGPK…KSPYGLWIPV (79 aa)) is disordered. A compositionally biased stretch (basic and acidic residues) spans 268 to 277 (PLEKTTKAAV). The residue at position 284 (Ser284) is a Phosphoserine.

The protein belongs to the RSRP family. Post-translationally, phosphorylated. Phosphorylation at Ser-120 and Ser-122 mediates the interaction with spliceosome proteins.

Its subcellular location is the nucleus. Its function is as follows. Probably acts as a spliceosomal factor that contributes to spliceosome assembly and regulates the isoform switching of proteins such as PARP6. The protein is Arginine/serine-rich protein 1 (Rsrp1) of Rattus norvegicus (Rat).